The following is a 429-amino-acid chain: Protein ABERRANT PANICLE ORGANIZATION 1 (429 aa).

A compositionally biased stretch (pro residues) spans 1 to 11; the sequence is MMNPRRLPPLP. Positions 1 to 21 are disordered; the sequence is MMNPRRLPPLPSSTSSASAAD. The F-box domain maps to 25 to 71; the sequence is PRVWRRLPQPLVDRVLACLPTPSFLRLRAACRRFYHLLFSSPFLHSH. Transmembrane regions (helical) follow at residues 72–92 and 112–132; these read LLLS…GHLL and VAGG…LAFL. Kelch repeat units lie at residues 229 to 277, 284 to 339, and 350 to 397; these read MAFA…ELGG, RVAL…AEGG, and YVVL…GAAG.

In terms of assembly, part of a putative SCF (ASK/Cullin/F-box) ubiquitin ligase complex. Interacts with FL/APO2. Expressed in seedlings, roots, leaves, shoot apical meristem (SAM), developing panicles, and, at lower levels, in developing seeds.

The protein localises to the membrane. Its pathway is protein modification; protein ubiquitination. In terms of biological role, component of SCF(ASK-cullin-F-box) E3 ubiquitin ligase complexes, which may mediate the ubiquitination and subsequent proteasomal degradation of target proteins. Together with FL/APO2, involved in the temporal regulation of meristem identity during both vegetative and reproductive developments in an APO2-dependent manner. Promotes spikelet formation by suppressing the precocious conversion of inflorescence meristems to spikelet meristems, probably via a positive regulation of class-C floral homeotic genes, but not of class-B genes, and through the control of cell proliferation in meristems. Mediates culm development and strength/diameter enhancement at internodes. Required for the regulation of the plastochron, floral organ identity, and floral determinacy. Controls the number of primary rachis branches (PRBs). May trigger the formation of vascular bundle systems which, consequently, promote carbohydrate translocation to panicles. Involved in ozone-induced grain yield regulation. The protein is Protein ABERRANT PANICLE ORGANIZATION 1 of Oryza sativa subsp. indica (Rice).